A 238-amino-acid chain; its full sequence is MGRKWANIVAKKTAKDGANSKVYAKFGVEIYVAAKKGDPDPETNTALKFVIDRAKQAQVPKHVIDKAIDKAKGNTDETFTEGRYEGFGPNGSMLIVDTLTSNVNRTAANVRAAFGKNGGNMGASGSVSYLFDNKGVVVFAGDDADSIFELLLEADVDVDDVEAEEGTITVYTAPTDLHKAIVALRESGIEEFQVTELEMIPQSEVELSGDDLATFEKLVDVLEDDEDVQKVYTNVEGF.

Belongs to the TACO1 family. YeeN subfamily.

Its subcellular location is the cytoplasm. In Streptococcus gordonii (strain Challis / ATCC 35105 / BCRC 15272 / CH1 / DL1 / V288), this protein is Probable transcriptional regulatory protein SGO_0454.